A 413-amino-acid chain; its full sequence is Putative glutamate synthase [NADPH] small chain (413 aa).

[4Fe-4S] cluster-binding residues include Cys33, Cys37, Cys43, and Cys47.

In terms of assembly, aggregate of 4 catalytic active heterodimers, consisting of a large and a small subunit. [4Fe-4S] cluster serves as cofactor.

It carries out the reaction 2 L-glutamate + NADP(+) = L-glutamine + 2-oxoglutarate + NADPH + H(+). It participates in amino-acid biosynthesis; L-glutamate biosynthesis via GLT pathway; L-glutamate from 2-oxoglutarate and L-glutamine (NADP(+) route): step 1/1. The protein operates within energy metabolism; nitrogen metabolism. This Cereibacter sphaeroides (Rhodobacter sphaeroides) protein is Putative glutamate synthase [NADPH] small chain (gltD).